The following is a 1941-amino-acid chain: Xin actin-binding repeat-containing protein 1 (1941 aa).

The tract at residues 1 to 41 (MAEPQKSSKVAIKKMEDDLPPPPIPDSIQVIAPASQDPNPL) is disordered. 27 Xin repeats span residues 108–123 (GEVQ…WALD), 143–158 (GDVK…QSVN), 176–191 (GDVH…QPLD), 215–230 (GDVK…QSLD), 255–270 (GDVK…EPLC), 293–308 (NAVR…QPLD), 331–346 (PDVS…QPLD), 368–383 (ADVT…QALD), 402–417 (GDVK…QPME), 439–454 (GDVK…CPLG), 475–490 (GDVK…LPLD), 510–525 (GNVK…TPLY), 548–563 (GDVK…RPLD), 586–601 (GDVR…QPMD), 624–639 (GDVK…QPMH), 658–673 (ADVK…QPLD), 697–712 (VDVK…EPLG), 736–751 (GEVS…KPLD), 769–784 (GSVH…YPMD), 805–820 (GDVG…YSLD), 842–857 (ANVK…QPLY), 880–895 (GDVK…KPLD), 917–932 (GDVQ…EPLD), 951–966 (GDVQ…QQVG), 982–997 (GDVR…QPVD), 1020–1035 (GDVK…QPMD), and 1055–1070 (ADVK…TPLD). Polar residues predominate over residues 1514 to 1565 (ASKQETKTLQSTIHQQESASTMRENTSTAIRTSTTRVQEASRTHTSVSQKSI). Disordered regions lie at residues 1514–1568 (ASKQ…IASH), 1715–1856 (ASGS…PPPA), and 1914–1941 (YKAR…GEVG). Over residues 1820–1833 (SASTNNSTNRSTKS) the composition is skewed to low complexity. Residues 1834 to 1843 (VPPPVPPKPP) show a composition bias toward pro residues.

This sequence belongs to the Xin family. In terms of tissue distribution, expressed at intercalated disks in the heart (at protein level).

It localises to the cell junction. Its subcellular location is the adherens junction. It is found in the desmosome. Involved in cardiac morphogenesis, including heart midline formation, cardiac tubule looping, myocardial formation and maintenance of heart beat speed and rhythm. May protect actin filaments from depolymerization. May play a role in development of normal skeletal muscle morphology, muscle fiber type composition and regulation of muscle satellite cell activation and survival. The chain is Xin actin-binding repeat-containing protein 1 from Gallus gallus (Chicken).